The following is a 334-amino-acid chain: Probable fructose-bisphosphate aldolase class 1 (334 aa).

The protein belongs to the class I fructose-bisphosphate aldolase family.

It carries out the reaction beta-D-fructose 1,6-bisphosphate = D-glyceraldehyde 3-phosphate + dihydroxyacetone phosphate. It participates in carbohydrate degradation; glycolysis; D-glyceraldehyde 3-phosphate and glycerone phosphate from D-glucose: step 4/4. The chain is Probable fructose-bisphosphate aldolase class 1 from Xanthomonas campestris pv. campestris (strain ATCC 33913 / DSM 3586 / NCPPB 528 / LMG 568 / P 25).